The sequence spans 174 residues: Inner membrane protein p22 (174 aa).

Residues 1 to 7 (MLHIKMT) lie on the Intravirion side of the membrane. The helical transmembrane segment at 8–28 (ISTLLIALIVLLIIILVVFLY) threads the bilayer. The Virion surface portion of the chain corresponds to 29–174 (HKKQQPPKKV…LYLPRNHKYA (146 aa)).

It belongs to the asfivirus inner membrane protein p22 family.

The protein localises to the virion membrane. Its subcellular location is the host cell membrane. This chain is Inner membrane protein p22, found in African swine fever virus (isolate Pig/Kenya/KEN-50/1950) (ASFV).